Consider the following 58-residue polypeptide: Cyclotide trypsin inhibitor TopI1 (58 aa).

The signal sequence occupies residues 1–23; the sequence is MKFIIVLLLLTALTLTSIPVIEG. The segment at residues 24–55 is a cross-link (cyclopeptide (Ile-Lys)); that stretch reads ILKRCKTYDDCKDVCKARKGKCEFGICKCMIK. Disulfide bonds link Cys-28/Cys-45, Cys-34/Cys-50, and Cys-38/Cys-52. The residue at position 56 (Ser-56) is a Serine amide.

This is a cyclic peptide. In terms of tissue distribution, expressed by the venom gland.

The protein resides in the secreted. Functionally, first cyclic scorpion trypsin inhibitor (Kd~0.5 nM). Does not inhibit chymotrypsin. In Tityus obscurus (Amazonian scorpion), this protein is Cyclotide trypsin inhibitor TopI1.